Here is a 470-residue protein sequence, read N- to C-terminus: Argininosuccinate lyase (470 aa).

The protein belongs to the lyase 1 family. Argininosuccinate lyase subfamily.

It localises to the cytoplasm. It carries out the reaction 2-(N(omega)-L-arginino)succinate = fumarate + L-arginine. It functions in the pathway amino-acid biosynthesis; L-arginine biosynthesis; L-arginine from L-ornithine and carbamoyl phosphate: step 3/3. The chain is Argininosuccinate lyase from Mycobacterium leprae (strain Br4923).